The primary structure comprises 142 residues: Protein spalt-accessory (142 aa).

The first 16 residues, 1 to 16 (MKLLIALFALVTAVNA), serve as a signal peptide directing secretion. The interval 75–142 (GFAGQGSPNQ…HHEHHGHHRH (68 aa)) is disordered. The segment covering 107–124 (GHFHENPHEYPEHHGDHH) has biased composition (basic and acidic residues). Basic residues predominate over residues 125–142 (REHHEHHGHHEHHGHHRH).

The protein localises to the secreted. In terms of biological role, likely to be involved in the establishment of the head. This chain is Protein spalt-accessory (sala), found in Drosophila melanogaster (Fruit fly).